Consider the following 146-residue polypeptide: Leghemoglobin Lb120-8 (146 aa).

The Globin domain occupies 2 to 146 (GFTEKQEALV…LASAIKKAMN (145 aa)). Nitrated tyrosine occurs at positions 24 and 29. Serine 44 is a binding site for heme b. Position 44 is a phosphoserine (serine 44). Histidine 61 is an O2 binding site. 3 residues coordinate heme b: lysine 64, histidine 93, and lysine 96. Tyrosine 134 is subject to Nitrated tyrosine.

It belongs to the plant globin family. Monomer. Post-translationally, nitrated in effective nodules and particularly in hypoxic conditions; this mechanism may play a protective role in the symbiosis by buffering toxic peroxynitrite NO(2)(-). Nitration level decrease during nodule senescence. Phosphorylation at Ser-44 disrupts the molecular environment of its porphyrin ring oxygen binding pocket, thus leading to a reduced oxygen consumption and to the delivery of oxygen O(2) to symbiosomes. As to expression, root nodules.

It localises to the cytoplasm. The protein localises to the cytosol. It is found in the nucleus. Leghemoglobin that reversibly binds oxygen O(2) through a pentacoordinated heme iron. In root nodules, facilitates the diffusion of oxygen to the bacteroids while preventing the bacterial nitrogenase from being inactivated by buffering dioxygen, nitric oxide and carbon monoxide, and promoting the formation of reactive oxygen species (ROS, e.g. H(2)O(2)). This role is essential for symbiotic nitrogen fixation (SNF). The sequence is that of Leghemoglobin Lb120-8 from Pisum sativum (Garden pea).